A 359-amino-acid polypeptide reads, in one-letter code: Serpentine receptor class epsilon-33 (359 aa).

7 helical membrane-spanning segments follow: residues 29-49 (VIISILELMIYLVCIHLVNVS), 65-85 (ILALPMFGMWYELIIGKFITI), 134-156 (YMYSWIFGVLTVAVERVIASVLI), 168-188 (PAILLIISQFLSISMAFGLLF), 194-214 (LSAHFPWMISCPISVAAYVFV), 255-275 (LVFAVLSFIGICGCGIAALHY), and 285-305 (LIENVLFLNPFLIGLTAMLSI).

The protein belongs to the nematode receptor-like protein sre family.

The protein resides in the membrane. This is Serpentine receptor class epsilon-33 (sre-33) from Caenorhabditis elegans.